The sequence spans 303 residues: Mycothiol acetyltransferase (303 aa).

Position 33 (Asp-33) interacts with 1D-myo-inositol 2-(L-cysteinylamino)-2-deoxy-alpha-D-glucopyranoside. Acetyl-CoA is bound by residues 78-80 and 86-91; these read VVV and RRGTGS. Residues 150–303 enclose the N-acetyltransferase domain; it reads VRFATYSGPH…AYAAVAPTDV (154 aa). Glu-177, Lys-218, and Glu-226 together coordinate 1D-myo-inositol 2-(L-cysteinylamino)-2-deoxy-alpha-D-glucopyranoside. An acetyl-CoA-binding site is contributed by 230 to 232; the sequence is VGV. Tyr-269 lines the 1D-myo-inositol 2-(L-cysteinylamino)-2-deoxy-alpha-D-glucopyranoside pocket. An acetyl-CoA-binding site is contributed by 274–279; that stretch reads NTAAVK.

This sequence belongs to the acetyltransferase family. MshD subfamily. Monomer.

It carries out the reaction 1D-myo-inositol 2-(L-cysteinylamino)-2-deoxy-alpha-D-glucopyranoside + acetyl-CoA = mycothiol + CoA + H(+). Its function is as follows. Catalyzes the transfer of acetyl from acetyl-CoA to desacetylmycothiol (Cys-GlcN-Ins) to form mycothiol. The chain is Mycothiol acetyltransferase from Mycolicibacterium gilvum (strain PYR-GCK) (Mycobacterium gilvum (strain PYR-GCK)).